A 230-amino-acid chain; its full sequence is Enolase-phosphatase E1 (230 aa).

It belongs to the HAD-like hydrolase superfamily. MasA/MtnC family. As to quaternary structure, monomer. Requires Mg(2+) as cofactor.

It carries out the reaction 5-methylsulfanyl-2,3-dioxopentyl phosphate + H2O = 1,2-dihydroxy-5-(methylsulfanyl)pent-1-en-3-one + phosphate. Its pathway is amino-acid biosynthesis; L-methionine biosynthesis via salvage pathway; L-methionine from S-methyl-5-thio-alpha-D-ribose 1-phosphate: step 3/6. The protein operates within amino-acid biosynthesis; L-methionine biosynthesis via salvage pathway; L-methionine from S-methyl-5-thio-alpha-D-ribose 1-phosphate: step 4/6. Functionally, bifunctional enzyme that catalyzes the enolization of 2,3-diketo-5-methylthiopentyl-1-phosphate (DK-MTP-1-P) into the intermediate 2-hydroxy-3-keto-5-methylthiopentenyl-1-phosphate (HK-MTPenyl-1-P), which is then dephosphorylated to form the acireductone 1,2-dihydroxy-3-keto-5-methylthiopentene (DHK-MTPene). The protein is Enolase-phosphatase E1 of Bradyrhizobium sp. (strain BTAi1 / ATCC BAA-1182).